Here is a 377-residue protein sequence, read N- to C-terminus: MSNEGKPLQSTESTKIDAKSGEKEKALSLVVGQIERNFGKGSIMRLGDASKMRVETISTGALTLDLALGGGYPKGRVIEVYGPESSGKTTLTLHAIAEIQRNGGVAAFVDAEHALDPVYAASLGVDVENLLVSQPDTGEMALEIVDQLIRSAAVDLVVVDSVAALTPRSEIEGEMGDHSVGAQARLMSQAMRKITGNIGKSGCTVIFLNQLRLKIGITYGNPETTTGGNALKFYASVRLDIRRIQTLKRGTEEYGIRAKVKVAKNKVAPPFRIAEFDILFGKGISTLGCLLDLADETNVVTRKGAWYSYEGDNIGQGRDNTITWLEQNPESKEIIEKLVKEKLTEGSEVSANSMRPLASAARQASSRPKLSQVSANG.

Polar residues predominate over residues 1–13 (MSNEGKPLQSTES). Residues 1–20 (MSNEGKPLQSTESTKIDAKS) form a disordered region. 82–89 (GPESSGKT) contacts ATP. The disordered stretch occupies residues 346 to 377 (GSEVSANSMRPLASAARQASSRPKLSQVSANG). Residues 362–377 (RQASSRPKLSQVSANG) show a composition bias toward polar residues.

This sequence belongs to the RecA family.

The protein localises to the cytoplasm. In terms of biological role, can catalyze the hydrolysis of ATP in the presence of single-stranded DNA, the ATP-dependent uptake of single-stranded DNA by duplex DNA, and the ATP-dependent hybridization of homologous single-stranded DNAs. It interacts with LexA causing its activation and leading to its autocatalytic cleavage. The polypeptide is Protein RecA (Prochlorococcus marinus (strain NATL1A)).